A 259-amino-acid chain; its full sequence is MATLFIADLHLSQQEPAITAGFLRFLAEEAPKAEALYILGDFFDYWIGDDDPQPLHRQVAGALRQLSDNGVPCYFICGNRDFLLGKSYAKRCGMTLLPDEQIITLYGQPILLLHGDTLCSDDRDYQRYRRRVHNPLLQWLFRRLPLRLRLKIAVGMRQQSQRSNSAKAMTIMDVNQETVCATLRRHGVQRMIHGHTHRPALHHFSLDDGRCALRAVLGAWHTHGSMIRVDAQGIHLIELPAHPAEDEIITTRLRSANLV.

Mn(2+)-binding residues include aspartate 8, histidine 10, aspartate 41, asparagine 79, and histidine 114. 79 to 80 (NR) provides a ligand contact to substrate. Aspartate 122, serine 160, asparagine 164, lysine 167, and histidine 195 together coordinate substrate. Positions 195 and 197 each coordinate Mn(2+).

Belongs to the LpxH family. Mn(2+) serves as cofactor.

It is found in the cell inner membrane. It carries out the reaction UDP-2-N,3-O-bis[(3R)-3-hydroxytetradecanoyl]-alpha-D-glucosamine + H2O = 2-N,3-O-bis[(3R)-3-hydroxytetradecanoyl]-alpha-D-glucosaminyl 1-phosphate + UMP + 2 H(+). It functions in the pathway glycolipid biosynthesis; lipid IV(A) biosynthesis; lipid IV(A) from (3R)-3-hydroxytetradecanoyl-[acyl-carrier-protein] and UDP-N-acetyl-alpha-D-glucosamine: step 4/6. In terms of biological role, hydrolyzes the pyrophosphate bond of UDP-2,3-diacylglucosamine to yield 2,3-diacylglucosamine 1-phosphate (lipid X) and UMP by catalyzing the attack of water at the alpha-P atom. Involved in the biosynthesis of lipid A, a phosphorylated glycolipid that anchors the lipopolysaccharide to the outer membrane of the cell. The protein is UDP-2,3-diacylglucosamine hydrolase of Edwardsiella ictaluri (strain 93-146).